A 539-amino-acid chain; its full sequence is MQGAIARVCMVVVAAILNHPLLFPNENTTVPEQDEDLLARMKEHQEKLEAEQKRLEQEISQNETSVIGDQDGYGWYFWSALCLVIFFTIEVCRQDLISAEIPDPAEDEDGDCSTGYHSAKSIALDRGTLNNFCKTRFFPYTNESGRVREFIEGFADDLLEALRSICDLKADLEVEDFAGIGSMFESWRVSKPPTCDLIVPFSPPQPLRFQFELWCDPSTEIPLDLQGCGRIQLIKPGGNGTDCLCGSIDLGDDMLCLLHNRNECEVLEDDALPELLCARDTTYLSKGQIMRWFQISVSKAWGKISHKYDFELAFRNLDFPGALKIKFPSGKTVVLNLTPAVQFENTDAYLISHFPSDTSNSSDTHWQLSLSVYEKNLLKHLAKSLPTNSCHIHCLQIVAFLHKKQTTLTGRSAFCNYHIKTALLHLLLSKRPAMWQPQNLDSRLRDLLSFLQQSLEEKKLYHALVGNPRIPVEILVPKIIRTAEPINLYRPLVLQRHVYAKMEEHFEEMVRNTSVLVQEYTPHFSNGHVRHEFSSAEQI.

The signal sequence occupies residues 1-24 (MQGAIARVCMVVVAAILNHPLLFP). Topologically, residues 25-71 (NENTTVPEQDEDLLARMKEHQEKLEAEQKRLEQEISQNETSVIGDQD) are extracellular. N-linked (GlcNAc...) asparagine glycans are attached at residues asparagine 27 and asparagine 62. Positions 32–68 (EQDEDLLARMKEHQEKLEAEQKRLEQEISQNETSVIG) form a coiled coil. Residues 72-92 (GYGWYFWSALCLVIFFTIEVC) form a helical membrane-spanning segment. Over 93 to 539 (RQDLISAEIP…RHEFSSAEQI (447 aa)) the chain is Cytoplasmic.

This sequence belongs to the ITPRIP family.

The protein localises to the cell membrane. It localises to the nucleus outer membrane. Functionally, enhances Ca(2+)-mediated inhibition of inositol 1,4,5-triphosphate receptor (ITPR) Ca(2+) release. In Danio rerio (Zebrafish), this protein is Inositol 1,4,5-trisphosphate receptor-interacting protein (itprip).